A 233-amino-acid chain; its full sequence is Tetrahydromethanopterin S-methyltransferase subunit D (233 aa).

6 consecutive transmembrane segments (helical) span residues 4–24 (LLLI…VHFV), 39–59 (VGTG…ITAA), 67–87 (LMIM…TMLV), 133–153 (FVSG…IYWA), 166–186 (MGAA…NAVI), and 209–229 (GIVA…LLVY).

This sequence belongs to the MtrD family. As to quaternary structure, the complex is composed of 8 subunits; MtrA, MtrB, MtrC, MtrD, MtrE, MtrF, MtrG and MtrH.

The protein resides in the cell membrane. The catalysed reaction is 5-methyl-5,6,7,8-tetrahydromethanopterin + coenzyme M + 2 Na(+)(in) = 5,6,7,8-tetrahydromethanopterin + methyl-coenzyme M + 2 Na(+)(out). It functions in the pathway one-carbon metabolism; methanogenesis from CO(2); methyl-coenzyme M from 5,10-methylene-5,6,7,8-tetrahydromethanopterin: step 2/2. In terms of biological role, part of a complex that catalyzes the formation of methyl-coenzyme M and tetrahydromethanopterin from coenzyme M and methyl-tetrahydromethanopterin. This is an energy-conserving, sodium-ion translocating step. The protein is Tetrahydromethanopterin S-methyltransferase subunit D of Methanothermobacter marburgensis (strain ATCC BAA-927 / DSM 2133 / JCM 14651 / NBRC 100331 / OCM 82 / Marburg) (Methanobacterium thermoautotrophicum).